The chain runs to 329 residues: Microtubule-associated protein RP/EB family member 1C (329 aa).

One can recognise a Calponin-homology (CH) domain in the interval 13-115 (FVGRSEILAW…FMQWMKKYCD (103 aa)). The span at 130-141 (REASKGGKEATK) shows a compositional bias: basic and acidic residues. The segment at 130–203 (REASKGGKEA…SAKQSKPVPA (74 aa)) is disordered. The span at 174-185 (SNNTGTHHSSTG) shows a compositional bias: low complexity. One can recognise an EB1 C-terminal domain in the interval 193 to 263 (PSAKQSKPVP…LYAADGEDVG (71 aa)). Residues 289–311 (KRKLIVNLDVDVAAITTLSPRQR) are required for nuclear localization.

Belongs to the MAPRE family. In terms of assembly, homodimer. In terms of tissue distribution, highly expressed in the root and shoot meristems, in guard cells of leaf stomata, pollen grains and pollen tubes.

It localises to the nucleus. The protein localises to the cytoplasm. The protein resides in the cytoskeleton. Its subcellular location is the spindle. It is found in the phragmoplast. Plant-specific EB1 subtype that functions preferentially at early stages of plant mitosis by regulating spindle positioning and chromosome segregation. Accumulates in the prophase nucleus and is required to maintain spindle bipolarity during premetaphase and/or metaphase and for efficient segregation of chromosomes at anaphase. May play a role in the dynamics of microtubule network in elongating pollen tubes. This Arabidopsis thaliana (Mouse-ear cress) protein is Microtubule-associated protein RP/EB family member 1C (EB1C).